The following is a 954-amino-acid chain: Leucine--tRNA ligase (954 aa).

The 'HIGH' region motif lies at 40 to 51 (PYPSGAGLHVGH). A 'KMSKS' region motif is present at residues 729-733 (KMSKS). Lys-732 is an ATP binding site.

Belongs to the class-I aminoacyl-tRNA synthetase family.

Its subcellular location is the cytoplasm. The enzyme catalyses tRNA(Leu) + L-leucine + ATP = L-leucyl-tRNA(Leu) + AMP + diphosphate. This chain is Leucine--tRNA ligase, found in Flavobacterium johnsoniae (strain ATCC 17061 / DSM 2064 / JCM 8514 / BCRC 14874 / CCUG 350202 / NBRC 14942 / NCIMB 11054 / UW101) (Cytophaga johnsonae).